A 163-amino-acid polypeptide reads, in one-letter code: MNLEQLINVLGLLVWIAARAVSRVGPHGSGLVYRELHDFYGYLQLDLLGPVVAGNRSVRTWREQADRARGTFVRRSGLNTSHILPVGGLSGGSGTLPAGLYRPEEEVFLLLNRCHGPLSTPKSACLAEVGVANASFLSRFNVGDFHGASWENGTAPDGEPGVC.

The N-terminal stretch at 1 to 22 (MNLEQLINVLGLLVWIAARAVS) is a signal peptide.

The protein belongs to the HHV-5 US34 protein family.

In Human cytomegalovirus (strain Merlin) (HHV-5), this protein is Protein US34 (US34).